The primary structure comprises 185 residues: Ribose 1,5-bisphosphate phosphokinase PhnN (185 aa).

Residue 10–17 participates in ATP binding; it reads GPSGSGKD.

This sequence belongs to the ribose 1,5-bisphosphokinase family.

It carries out the reaction alpha-D-ribose 1,5-bisphosphate + ATP = 5-phospho-alpha-D-ribose 1-diphosphate + ADP. It functions in the pathway metabolic intermediate biosynthesis; 5-phospho-alpha-D-ribose 1-diphosphate biosynthesis; 5-phospho-alpha-D-ribose 1-diphosphate from D-ribose 5-phosphate (route II): step 3/3. Functionally, catalyzes the phosphorylation of ribose 1,5-bisphosphate to 5-phospho-D-ribosyl alpha-1-diphosphate (PRPP). Accepts ATP but not GTP as a phosphoryl donor, and uses ribose 1,5-bisphosphate but not ribose, ribose 1-phosphate, or ribose 5-phosphate as a phosphoryl acceptor. This is Ribose 1,5-bisphosphate phosphokinase PhnN (phnN) from Escherichia coli (strain K12).